Consider the following 604-residue polypeptide: Transcriptional repressor rco-1 (604 aa).

Disordered regions lie at residues 87 to 110 (RGGAPGNMNPPPQHPGQQQPPAIG) and 124 to 264 (GGQA…DRLP). Over residues 144-163 (MPAPPGLQGPPPPPPPPSQQ) the composition is skewed to pro residues. Composition is skewed to low complexity over residues 164–177 (PPFQQQYQGPQGPG) and 190–209 (PGPAGKRGIGRPPAGGPATP). Residues 210 to 229 (QINTPIPYNGGPAQSPQVPT) are compositionally biased toward polar residues. WD repeat units lie at residues 295-324 (QHESVVCCVRFSMDGKYVATGCNRSAQIYD), 342-372 (TGDLYIRSVCFSPDGKYLATGAEDKLIRVWD), 384-414 (GHEQDIYSLDFSRDGRTIASGSGDRTVRLWD), 425-455 (SIEDGVTTVAISPDKQFVAAGSLDKSVRVWD), 469-499 (GHKDSVYSVAFSPDGRNLVSGSLDKTIKMWE), 523-553 (GHRDFVLSVALTPDSQWVLSGSKDRGVQFWD), and 565-600 (GHKNSVISVAPSPVTGPNGVGYFATGSGDMRARIWS).

Represses transcription by RNA polymerase II. May be involved at several stages of conidiation and other growth and development processes. Appears to regulate genes that are expressed in asexual and sexual spore pathways. The chain is Transcriptional repressor rco-1 (rco-1) from Neurospora crassa (strain ATCC 24698 / 74-OR23-1A / CBS 708.71 / DSM 1257 / FGSC 987).